We begin with the raw amino-acid sequence, 406 residues long: ATP synthase subunit a (406 aa).

Composition is skewed to low complexity over residues 22–31 (AGEHGAPAPE) and 43–59 (DAAG…AEHG). Residues 22–76 (AGEHGAPAPEVATPAEGHGARDAAGAATDPHGAAAEHGAAAHEDPAQHGAAGAEA) are disordered. The next 6 membrane-spanning stretches (helical) occupy residues 151 to 171 (KHVV…FAAV), 209 to 229 (FVPY…FGLV), 232 to 252 (AATA…TFLI), 278 to 298 (LWPL…TKPF), 304 to 324 (LFAN…LIFA), and 351 to 371 (VQAY…VAHH). The disordered stretch occupies residues 375-406 (DEHEEHGHGAAATGGAHGSHGSHVAGASPGHG). Residues 383 to 406 (GAAATGGAHGSHGSHVAGASPGHG) show a composition bias toward low complexity.

The protein belongs to the ATPase A chain family. In terms of assembly, F-type ATPases have 2 components, CF(1) - the catalytic core - and CF(0) - the membrane proton channel. CF(1) has five subunits: alpha(3), beta(3), gamma(1), delta(1), epsilon(1). CF(0) has three main subunits: a(1), b(2) and c(9-12). The alpha and beta chains form an alternating ring which encloses part of the gamma chain. CF(1) is attached to CF(0) by a central stalk formed by the gamma and epsilon chains, while a peripheral stalk is formed by the delta and b chains.

It localises to the cell inner membrane. Key component of the proton channel; it plays a direct role in the translocation of protons across the membrane. The protein is ATP synthase subunit a of Anaeromyxobacter sp. (strain Fw109-5).